The primary structure comprises 223 residues: MKFFIFTCLLAVALAKHKMEHVSSSEEPINIFQEIYKQEKNMAIHPRKEKLCTTSCEEVVRNANEEEYSIRSSSEESAEVAPEEIKITVDDKHYQKALNEINQFYQKFPQYLQYPYQGPIVLNPWDQVKRNAGPFTPTVNREQLSTSEENSKKTIDMESTEVFTKKTKLTEEEKNRLNFLKKISQYYQKFAWPQYLKTVDQHQKAMKPWTQPKTNAIPYVRYL.

Positions 1-15 are cleaved as a signal peptide; it reads MKFFIFTCLLAVALA. 11 positions are modified to phosphoserine: S23, S24, S25, S72, S73, S74, S77, S145, S147, S151, and S159. Positions 77–141 form a repeat; sequence SAEVAPEEIK…AGPFTPTVNR (65 aa). A repeat spans 159-223; it reads STEVFTKKTK…TNAIPYVRYL (65 aa).

The protein belongs to the alpha-casein family. In terms of tissue distribution, mammary gland specific. Secreted in milk.

It is found in the secreted. In terms of biological role, important role in the capacity of milk to transport calcium phosphate. This Capra hircus (Goat) protein is Alpha-S2-casein (CSN1S2).